We begin with the raw amino-acid sequence, 419 residues long: UDP-N-acetylglucosamine 1-carboxyvinyltransferase 2 (419 aa).

Position 24-25 (24-25 (KN)) interacts with phosphoenolpyruvate. R94 contributes to the UDP-N-acetyl-alpha-D-glucosamine binding site. The active-site Proton donor is C118. Residue C118 is modified to 2-(S-cysteinyl)pyruvic acid O-phosphothioketal. UDP-N-acetyl-alpha-D-glucosamine is bound by residues 123 to 127 (RPIDQ), D307, and I329.

It belongs to the EPSP synthase family. MurA subfamily.

It localises to the cytoplasm. It catalyses the reaction phosphoenolpyruvate + UDP-N-acetyl-alpha-D-glucosamine = UDP-N-acetyl-3-O-(1-carboxyvinyl)-alpha-D-glucosamine + phosphate. It functions in the pathway cell wall biogenesis; peptidoglycan biosynthesis. Functionally, cell wall formation. Adds enolpyruvyl to UDP-N-acetylglucosamine. In Staphylococcus aureus (strain MSSA476), this protein is UDP-N-acetylglucosamine 1-carboxyvinyltransferase 2.